The chain runs to 306 residues: Large ribosomal subunit protein uL2m (306 aa).

A mitochondrion-targeting transit peptide spans 1–60 (MALCALTSALRSLSLASAAITARVPTLLPAAQIQSNVLLQLPPALVSPSYRPVHMSADRS).

This sequence belongs to the universal ribosomal protein uL2 family. Component of the mitochondrial ribosome large subunit (39S) which comprises a 16S rRNA and about 50 distinct proteins.

It localises to the mitochondrion. The chain is Large ribosomal subunit protein uL2m (Mrpl2) from Mus musculus (Mouse).